We begin with the raw amino-acid sequence, 203 residues long: Outer-membrane lipoprotein LolB (203 aa).

An N-terminal signal peptide occupies residues 1-18 (MTLRSFLIFFLSSLILAG). A lipid anchor (N-palmitoyl cysteine) is attached at cysteine 19. Residue cysteine 19 is the site of S-diacylglycerol cysteine attachment.

Belongs to the LolB family. As to quaternary structure, monomer.

The protein resides in the cell outer membrane. Its function is as follows. Plays a critical role in the incorporation of lipoproteins in the outer membrane after they are released by the LolA protein. The chain is Outer-membrane lipoprotein LolB from Vibrio parahaemolyticus serotype O3:K6 (strain RIMD 2210633).